The primary structure comprises 264 residues: Intermembrane phospholipid transport system ATP-binding protein MlaF (264 aa).

In terms of domain architecture, ABC transporter spans 6-242 (IEVKNLTFKR…QDLRVVQFLK (237 aa)). 38–45 (GPSGIGKT) contributes to the ATP binding site.

The protein belongs to the ABC transporter superfamily. MlaF family. In terms of assembly, the complex is composed of two ATP-binding proteins (MlaF), two transmembrane proteins (MlaE), two cytoplasmic solute-binding proteins (MlaB) and six periplasmic solute-binding proteins (MlaD).

The protein resides in the cell inner membrane. Its function is as follows. Part of the ABC transporter complex MlaFEDB, which is involved in a phospholipid transport pathway that maintains lipid asymmetry in the outer membrane by retrograde trafficking of phospholipids from the outer membrane to the inner membrane. Responsible for energy coupling to the transport system. The chain is Intermembrane phospholipid transport system ATP-binding protein MlaF from Haemophilus influenzae (strain ATCC 51907 / DSM 11121 / KW20 / Rd).